Here is a 236-residue protein sequence, read N- to C-terminus: Sorulation-regulated protein 2 (236 aa).

An N-terminal signal peptide occupies residues 1–20 (MLGLYLSSLFFAFFMAQVFA). N-linked (GlcNAc...) asparagine glycans are attached at residues Asn-155, Asn-160, Asn-203, and Asn-212. A lipid anchor (GPI-anchor amidated asparagine) is attached at Asn-212. A propeptide spans 213–236 (SSSSLMPSMGILSFLFGLYLLLHP) (removed in mature form).

The GPI-anchor is attached to the protein in the endoplasmic reticulum and serves to target the protein to the cell surface. There, the glucosamine-inositol phospholipid moiety is cleaved off and the GPI-modified mannoprotein is covalently attached via its lipidless GPI glycan remnant to the 1,6-beta-glucan of the outer cell wall layer. Post-translationally, N-glycosylated.

The protein resides in the spore wall. It is found in the secreted. The protein localises to the cell wall. Its subcellular location is the membrane. This Saccharomyces cerevisiae (strain ATCC 204508 / S288c) (Baker's yeast) protein is Sorulation-regulated protein 2.